The sequence spans 284 residues: Cuticle collagen dpy-5 (284 aa).

The segment at 88 to 284 is disordered; it reads GLPSQGCPAG…PCPERKRRRV (197 aa). 2 triple-helical region regions span residues 94–126 and 143–270; these read CPAG…PGLN and GPPG…VGAD. Residues 106-115 show a composition bias toward gly residues; the sequence is GEPGGTGPDG. Residues 163 to 177 are compositionally biased toward basic and acidic residues; sequence AGKRGTPGKDGEPGR. 3 stretches are compositionally biased toward low complexity: residues 181 to 193, 224 to 246, and 255 to 271; these read IGDQ…DGQP, EPGN…TGQP, and DGTP…GADA.

It belongs to the cuticular collagen family. Collagen polypeptide chains are complexed within the cuticle by disulfide bonds and other types of covalent cross-links. Post-translationally, may be a substrate of bli-4.

Functionally, nematode cuticles are composed largely of collagen-like proteins. The cuticle functions both as an exoskeleton and as a barrier to protect the worm from its environment. This is Cuticle collagen dpy-5 (dpy-5) from Caenorhabditis elegans.